The primary structure comprises 253 residues: Probable transcriptional regulatory protein RAF_ORF0717 (253 aa).

The segment at 1–21 is disordered; it reads MAGHSKFKNIQHRKGAQDKKR.

It belongs to the TACO1 family.

It localises to the cytoplasm. The chain is Probable transcriptional regulatory protein RAF_ORF0717 from Rickettsia africae (strain ESF-5).